A 674-amino-acid polypeptide reads, in one-letter code: Probable copper-transporting P-type ATPase B (674 aa).

Positions 1–22 are disordered; that stretch reads MNHSNQMHHDNHESHNHHSGHA. Over residues 7-16 the composition is skewed to basic and acidic residues; the sequence is MHHDNHESHN. 6 helical membrane-spanning segments follow: residues 32–52, 57–77, 95–115, 127–147, 284–304, and 315–335; these read FFVS…MGVN, FTFP…FFYG, GMMT…LYAF, TMDF…GHWI, GYLF…WMLI, and LVTV…PLVT. Residue Asp-367 is the 4-aspartylphosphate intermediate of the active site. Positions 565 and 569 each coordinate Mg(2+). 2 helical membrane-spanning segments follow: residues 623-645 and 649-671; these read LWWG…AFIG and SPAI…AFTL.

The protein belongs to the cation transport ATPase (P-type) (TC 3.A.3) family. Type IB subfamily.

The protein localises to the cell membrane. It catalyses the reaction Cu(+)(in) + ATP + H2O = Cu(+)(out) + ADP + phosphate + H(+). In terms of biological role, involved in copper transport. This Staphylococcus epidermidis (strain ATCC 35984 / DSM 28319 / BCRC 17069 / CCUG 31568 / BM 3577 / RP62A) protein is Probable copper-transporting P-type ATPase B (copB).